The primary structure comprises 183 residues: uncharacterized protein (183 aa).

It belongs to the chlamydial CPn_0803/CT_584/TC_0873 family.

This is an uncharacterized protein from Chlamydia muridarum (strain MoPn / Nigg).